The chain runs to 511 residues: GMP synthase [glutamine-hydrolyzing] (511 aa).

Residues 6-196 form the Glutamine amidotransferase type-1 domain; that stretch reads LVLVLDFGSQ…VFDVCGCTGD (191 aa). The Nucleophile role is filled by C83. Residues H170 and E172 contribute to the active site. A GMPS ATP-PPase domain is found at 197 to 386; it reads WSIENFIDME…LGVPDRIVWR (190 aa). 224 to 230 contacts ATP; sequence SGGVDSS.

In terms of assembly, homodimer.

It carries out the reaction XMP + L-glutamine + ATP + H2O = GMP + L-glutamate + AMP + diphosphate + 2 H(+). It participates in purine metabolism; GMP biosynthesis; GMP from XMP (L-Gln route): step 1/1. Functionally, catalyzes the synthesis of GMP from XMP. The polypeptide is GMP synthase [glutamine-hydrolyzing] (Oceanobacillus iheyensis (strain DSM 14371 / CIP 107618 / JCM 11309 / KCTC 3954 / HTE831)).